The sequence spans 147 residues: DNA-directed RNA polymerase RPB6 homolog (147 aa).

It belongs to the archaeal RpoK/eukaryotic RPB6 RNA polymerase subunit family. In terms of assembly, part of the viral DNA-directed RNA polymerase that consists of 8 polII-like subunits (RPB1, RPB2, RPB3, RPB5, RPB6, RPB7, RPB9, RPB10), a capping enzyme and a termination factor.

It localises to the host cytoplasm. The protein resides in the virion. Functionally, component of the DNA-directed RNA polymerase (RNAP) that catalyzes the transcription in the cytoplasm of viral DNA into RNA using the four ribonucleoside triphosphates as substrates. This Ornithodoros (relapsing fever ticks) protein is DNA-directed RNA polymerase RPB6 homolog.